A 156-amino-acid chain; its full sequence is Ribosome maturation factor RimP (156 aa).

The protein belongs to the RimP family.

The protein resides in the cytoplasm. Required for maturation of 30S ribosomal subunits. The protein is Ribosome maturation factor RimP of Bacillus cereus (strain G9842).